Reading from the N-terminus, the 346-residue chain is UDP-3-O-acylglucosamine N-acyltransferase (346 aa).

His253 acts as the Proton acceptor in catalysis.

It belongs to the transferase hexapeptide repeat family. LpxD subfamily. Homotrimer.

The enzyme catalyses a UDP-3-O-[(3R)-3-hydroxyacyl]-alpha-D-glucosamine + a (3R)-hydroxyacyl-[ACP] = a UDP-2-N,3-O-bis[(3R)-3-hydroxyacyl]-alpha-D-glucosamine + holo-[ACP] + H(+). It participates in bacterial outer membrane biogenesis; LPS lipid A biosynthesis. Its function is as follows. Catalyzes the N-acylation of UDP-3-O-acylglucosamine using 3-hydroxyacyl-ACP as the acyl donor. Is involved in the biosynthesis of lipid A, a phosphorylated glycolipid that anchors the lipopolysaccharide to the outer membrane of the cell. This is UDP-3-O-acylglucosamine N-acyltransferase from Rickettsia prowazekii (strain Madrid E).